The sequence spans 539 residues: uncharacterized protein (539 aa).

Residue 6–20 (LIIGGGGAAARAAIE) coordinates FAD. Residues His227 and Arg243 contribute to the active site.

Belongs to the FAD-dependent oxidoreductase 2 family. FRD/SDH subfamily. It depends on FAD as a cofactor.

This is an uncharacterized protein from Methanocaldococcus jannaschii (strain ATCC 43067 / DSM 2661 / JAL-1 / JCM 10045 / NBRC 100440) (Methanococcus jannaschii).